The primary structure comprises 530 residues: uncharacterized protein (530 aa).

5 helical membrane-spanning segments follow: residues 4–23, 28–47, 57–79, 91–113, and 148–170; these read FLAA…GLAI, LFGV…VVST, FVFQ…PAFF, LFMI…AFGL, and VIGY…AVGA. An RCK C-terminal domain is found at 260–344; the sequence is LGGECDTKIE…MGEVRRFLGD (85 aa). Transmembrane regions (helical) follow at residues 352–374, 379–398, 419–441, and 451–473; these read VNLL…PVPL, TMYL…LGAL, LGLA…QALT, and VGFA…LLKL.

Belongs to the AAE transporter (TC 2.A.81) family.

It localises to the cell membrane. This is an uncharacterized protein from Corynebacterium efficiens (strain DSM 44549 / YS-314 / AJ 12310 / JCM 11189 / NBRC 100395).